We begin with the raw amino-acid sequence, 663 residues long: Ankyrin repeat and SAM domain-containing protein 3 (663 aa).

The segment at 1–421 (MSELSDEASE…PGSEPQAEKS (421 aa)) is interaction with NEK7. S2 and S5 each carry phosphoserine. 6 ANK repeats span residues 34–64 (DVPLDLHTAASIGQYEVVKECVQRRELDLNK), 68–97 (GGWTPLMYASYIGHDTIVHLLLEAGVSVNV), 101–130 (EGQTPLMLASSCGNESIAYFLLQQGAELEM), 134–163 (QGWTALFHCTSAGHQQMVKFLLESGANANV), 168–197 (YGFTPLMEAAAAGHEIIVQYFLNHGVKVDT), and 201–220 (SGATARMLAKQYGHMKIVAL). N96 bears the 3-hydroxyasparagine mark. Residues S201, S225, S243, S244, and S245 each carry the phosphoserine modification. 2 disordered regions span residues 242–261 (LSSSDESWPVPQRQRPCRKK) and 278–425 (TGLG…PYSG). A Phosphothreonine modification is found at T318. S319 bears the Phosphoserine mark. Over residues 322 to 337 (NERDVESSSSSSREEP) the composition is skewed to basic and acidic residues. 3 positions are modified to phosphoserine: S366, S369, and S373. The span at 378–395 (KSSVRKQTRTYLKNKSRH) shows a compositional bias: basic residues. Positions 424-487 (SGPQDLATLL…TSAIARWHSS (64 aa)) constitute an SAM domain. The stretch at 500 to 575 (ADRLEAEMQE…AALVLDQLRA (76 aa)) forms a coiled coil. S540 carries the phosphoserine modification. Disordered stretches follow at residues 585-604 (KQHHSPSEATQNPPFLPADS) and 637-663 (AEPGETTDAEWEEMEGTIARRDDSDVG). Acidic residues predominate over residues 641-651 (ETTDAEWEEME). The span at 654-663 (IARRDDSDVG) shows a compositional bias: basic and acidic residues.

Homooligomer. Interacts (via SAM domain) with ANKS6 (via SAM domain). Interacts with BICC1. Interacts with NPHP1. Interacts with NEK8. Interacts with HIF1AN. Interacts with NEK7; this interaction alters the subcellular distribution of NEK7 by preventing its nuclear translocation. In terms of processing, hydroxylated at Asn-96, most probably by HIF1AN. Phosphorylations at Ser-5, Ser-225, Thr-318, Ser-319, Ser-366 and Ser-369 occur in a NEK7-dependent manner. Post-translationally, polyubiquitinated.

The protein localises to the cell projection. Its subcellular location is the cilium. It is found in the cytoplasm. May be involved in vasopressin signaling in the kidney. In Rattus norvegicus (Rat), this protein is Ankyrin repeat and SAM domain-containing protein 3 (Anks3).